The chain runs to 179 residues: Interleukin-22b (179 aa).

The first 33 residues, 1–33 (MAVLQKSMSFSLMGTLAASCLLLIALWAQEANA), serve as a signal peptide directing secretion. Cystine bridges form between Cys-40–Cys-132 and Cys-89–Cys-178. N-linked (GlcNAc...) asparagine glycans are attached at residues Asn-54, Asn-68, and Asn-97.

This sequence belongs to the IL-10 family.

The protein resides in the secreted. Cytokine that contributes to the inflammatory response in vivo. This is Interleukin-22b from Mus musculus (Mouse).